We begin with the raw amino-acid sequence, 708 residues long: DNA-directed RNA polymerase III subunit RPC5 (708 aa).

A compositionally biased stretch (basic and acidic residues) spans 146–155; sequence DAKHREREAA. The interval 146-170 is disordered; sequence DAKHREREAANEAGDSSQDEAEDDV. 2 positions are modified to phosphoserine: Ser161 and Ser162. A Glycyl lysine isopeptide (Lys-Gly) (interchain with G-Cter in SUMO2) cross-link involves residue Lys171. Ser192 is modified (phosphoserine). Residue Tyr224 is modified to Phosphotyrosine. Residue Lys432 forms a Glycyl lysine isopeptide (Lys-Gly) (interchain with G-Cter in SUMO2) linkage. Residues 485-552 are disordered; it reads QLRVPAVPPG…DSFNGHPPQG (68 aa). Lys498 participates in a covalent cross-link: Glycyl lysine isopeptide (Lys-Gly) (interchain with G-Cter in SUMO1); alternate. Residue Lys498 forms a Glycyl lysine isopeptide (Lys-Gly) (interchain with G-Cter in SUMO2); alternate linkage. A compositionally biased stretch (acidic residues) spans 502–519; that stretch reads VSEEGEEDEEQEAEEEPM. Ser503 and Ser522 each carry phosphoserine. The interval 556–708 is required for Pol III complex stability; it reads TPVARELKAF…MWYLKGTVQS (153 aa). Lys659 is covalently cross-linked (Glycyl lysine isopeptide (Lys-Gly) (interchain with G-Cter in SUMO2)).

Component of the RNA polymerase III complex consisting of at least 17 subunits: a ten-subunit horseshoe-shaped catalytic core composed of POLR3A/RPC1, POLR3B/RPC2, POLR1C/RPAC1, POLR1D/RPAC2, POLR3K/RPC10, POLR2E/RPABC1, POLR2F/RPABC2, POLR2H/RPABC3, POLR2K/RPABC4 and POLR2L/RPABC5; the stalk composed of two subunits POLR3H/RPC8 and CRCP/RPC9, forming a structural mobile part that protrudes out of the core and functions primarily in transcription initiation; and additional subunits homologous to general transcription factors of the RNA polymerase II machinery, POLR3D/RPC4-POLR3E/RPC5 heterodimer and POLR3/CRPC3-POLR3F/RPC6-POLR3G/RPC7 heterotrimer.

Its subcellular location is the nucleus. In terms of biological role, DNA-dependent RNA polymerase catalyzes the transcription of DNA into RNA using the four ribonucleoside triphosphates as substrates. Specific peripheric component of RNA polymerase III (Pol III) which synthesizes small non-coding RNAs including 5S rRNA, snRNAs, tRNAs and miRNAs from at least 500 distinct genomic loci. Assembles with POLR3D/RPC4 forming a subcomplex that binds the Pol III core. Enables recruitment of Pol III at transcription initiation site and drives transcription initiation from both type 2 and type 3 DNA promoters. Required for efficient transcription termination and reinitiation. Plays a key role in sensing and limiting infection by intracellular bacteria and DNA viruses. Acts as a nuclear and cytosolic DNA sensor involved in innate immune response. Can sense non-self dsDNA that serves as template for transcription into dsRNA. The non-self RNA polymerase III transcripts, such as Epstein-Barr virus-encoded RNAs (EBERs) induce type I interferon and NF-kappa-B through the RIG-I pathway. In Homo sapiens (Human), this protein is DNA-directed RNA polymerase III subunit RPC5.